The primary structure comprises 123 residues: Large ribosomal subunit protein uL14 (123 aa).

Belongs to the universal ribosomal protein uL14 family. Part of the 50S ribosomal subunit. Forms a cluster with proteins L3 and L19. In the 70S ribosome, L14 and L19 interact and together make contacts with the 16S rRNA in bridges B5 and B8.

Binds to 23S rRNA. Forms part of two intersubunit bridges in the 70S ribosome. This chain is Large ribosomal subunit protein uL14, found in Proteus mirabilis (strain HI4320).